The primary structure comprises 466 residues: Neuraminidase (466 aa).

Topologically, residues 1–8 are intravirion; it reads MLPSTIQT. The helical transmembrane segment at 9–31 threads the bilayer; that stretch reads LTLFLTSGGVLLSLYVSASLSYL. Residues 13–35 are involved in apical transport and lipid raft association; sequence LTSGGVLLSLYVSASLSYLLYSD. The Virion surface portion of the chain corresponds to 32 to 466; sequence LYSDILLKFS…DTVTGVDMAL (435 aa). The tract at residues 38-86 is hypervariable stalk region; the sequence is LKFSPTEITAPKVPLDCANASNVQAVNRSATKGMTLLLSEPEWTYPRLS. Asparagine 56 and asparagine 64 each carry an N-linked (GlcNAc...) asparagine; by host glycan. Intrachain disulfides connect cysteine 87–cysteine 420, cysteine 122–cysteine 127, cysteine 182–cysteine 229, cysteine 231–cysteine 236, cysteine 277–cysteine 291, cysteine 279–cysteine 289, cysteine 318–cysteine 337, and cysteine 424–cysteine 447. The interval 89 to 466 is head of neuraminidase; that stretch reads GSTFQKALLI…DTVTGVDMAL (378 aa). Residue arginine 116 coordinates substrate. Residue asparagine 144 is glycosylated (N-linked (GlcNAc...) asparagine; by host). The active-site Proton donor/acceptor is the aspartate 149. Arginine 150 contributes to the substrate binding site. Residue 275-276 participates in substrate binding; that stretch reads EE. Asparagine 284 carries N-linked (GlcNAc...) asparagine; by host glycosylation. Arginine 292 is a binding site for substrate. Residues aspartate 293 and aspartate 324 each coordinate Ca(2+). Substrate is bound at residue arginine 374. The Nucleophile role is filled by tyrosine 409.

It belongs to the glycosyl hydrolase 34 family. In terms of assembly, homotetramer. Ca(2+) is required as a cofactor. Post-translationally, N-glycosylated.

It localises to the virion membrane. The protein localises to the host apical cell membrane. It catalyses the reaction Hydrolysis of alpha-(2-&gt;3)-, alpha-(2-&gt;6)-, alpha-(2-&gt;8)- glycosidic linkages of terminal sialic acid residues in oligosaccharides, glycoproteins, glycolipids, colominic acid and synthetic substrates.. Its activity is regulated as follows. Inhibited by the neuraminidase inhibitors zanamivir (Relenza) and oseltamivir (Tamiflu). These drugs interfere with the release of progeny virus from infected cells and are effective against all influenza strains. Resistance to neuraminidase inhibitors is quite rare. Its function is as follows. Catalyzes the removal of terminal sialic acid residues from viral and cellular glycoconjugates. Cleaves off the terminal sialic acids on the glycosylated HA during virus budding to facilitate virus release. Additionally helps virus spread through the circulation by further removing sialic acids from the cell surface. These cleavages prevent self-aggregation and ensure the efficient spread of the progeny virus from cell to cell. Otherwise, infection would be limited to one round of replication. Described as a receptor-destroying enzyme because it cleaves a terminal sialic acid from the cellular receptors. May facilitate viral invasion of the upper airways by cleaving the sialic acid moieties on the mucin of the airway epithelial cells. Likely to plays a role in the budding process through its association with lipid rafts during intracellular transport. May additionally display a raft-association independent effect on budding. Plays a role in the determination of host range restriction on replication and virulence. Sialidase activity in late endosome/lysosome traffic seems to enhance virus replication. In Homo sapiens (Human), this protein is Neuraminidase.